A 230-amino-acid polypeptide reads, in one-letter code: MGYLHVLAQRGVIHATWVSALEPVSSNLAAMGDCLRSLRSKGESFLPAPRNILRAFRYPFDSVRVLIVGQDPYPTQGHPIGLSFAVDHKVRPLPGSLQNIYTEYRSDLNLDPPQHGDISLWSERGVMLLNRTLTVRPGIPSSHRGLGWEEITQTAVRALAARDVPLIAILWGRHAQELKSVLQSDRVAILESVHPSPMSATRGFFGSKPFSKANDLLRDLGSAPIDWRLT.

The active-site Proton acceptor is the aspartate 71.

The protein belongs to the uracil-DNA glycosylase (UDG) superfamily. UNG family.

The protein localises to the cytoplasm. The enzyme catalyses Hydrolyzes single-stranded DNA or mismatched double-stranded DNA and polynucleotides, releasing free uracil.. Excises uracil residues from the DNA which can arise as a result of misincorporation of dUMP residues by DNA polymerase or due to deamination of cytosine. The chain is Uracil-DNA glycosylase from Tropheryma whipplei (strain TW08/27) (Whipple's bacillus).